The sequence spans 82 residues: ATP synthase subunit c, chloroplastic (82 aa).

2 consecutive transmembrane segments (helical) span residues isoleucine 4–proline 24 and leucine 57–alanine 77.

The protein belongs to the ATPase C chain family. F-type ATPases have 2 components, F(1) - the catalytic core - and F(0) - the membrane proton channel. F(1) has five subunits: alpha(3), beta(3), gamma(1), delta(1), epsilon(1). F(0) has four main subunits: a(1), b(1), b'(1) and c(10-14). The alpha and beta chains form an alternating ring which encloses part of the gamma chain. F(1) is attached to F(0) by a central stalk formed by the gamma and epsilon chains, while a peripheral stalk is formed by the delta, b and b' chains.

It is found in the plastid. Its subcellular location is the chloroplast thylakoid membrane. Its function is as follows. F(1)F(0) ATP synthase produces ATP from ADP in the presence of a proton or sodium gradient. F-type ATPases consist of two structural domains, F(1) containing the extramembraneous catalytic core and F(0) containing the membrane proton channel, linked together by a central stalk and a peripheral stalk. During catalysis, ATP synthesis in the catalytic domain of F(1) is coupled via a rotary mechanism of the central stalk subunits to proton translocation. Key component of the F(0) channel; it plays a direct role in translocation across the membrane. A homomeric c-ring of between 10-14 subunits forms the central stalk rotor element with the F(1) delta and epsilon subunits. In Trieres chinensis (Marine centric diatom), this protein is ATP synthase subunit c, chloroplastic.